Reading from the N-terminus, the 214-residue chain is UBX domain-containing protein 10 (214 aa).

A compositionally biased stretch (basic residues) spans 1–13; sequence MHVTRPKSSKGRS. Positions 1 to 79 are disordered; sequence MHVTRPKSSK…AYDRPPEEPV (79 aa). Residues 16 to 25 show a composition bias toward polar residues; that stretch reads MITNSSMIYT. The segment covering 49-60 has biased composition (low complexity); the sequence is SLRSRAILRRSS. Residues 127–204 form the UBX domain; the sequence is PEESDLLLAI…GVLNKSVLCI (78 aa).

It belongs to the UBXN10 family.

The protein resides in the cell projection. Its subcellular location is the cilium. Required for ciliogenesis. Acts as a tethering factor that facilitates recruitment of vcp/p97 to the intraflagellar transport complex B (IFT-B) in cilia. The polypeptide is UBX domain-containing protein 10 (Danio rerio (Zebrafish)).